Reading from the N-terminus, the 344-residue chain is Anthranilate phosphoribosyltransferase (344 aa).

5-phospho-alpha-D-ribose 1-diphosphate is bound by residues Gly79, 82–83 (GD), Thr87, 89–92 (NIST), 107–115 (KHGNRSVSS), and Ser119. Gly79 provides a ligand contact to anthranilate. A Mg(2+)-binding site is contributed by Ser91. Asn110 contacts anthranilate. Arg165 contacts anthranilate. Residues Asp224 and Glu225 each contribute to the Mg(2+) site.

It belongs to the anthranilate phosphoribosyltransferase family. Homodimer. The cofactor is Mg(2+).

The catalysed reaction is N-(5-phospho-beta-D-ribosyl)anthranilate + diphosphate = 5-phospho-alpha-D-ribose 1-diphosphate + anthranilate. Its pathway is amino-acid biosynthesis; L-tryptophan biosynthesis; L-tryptophan from chorismate: step 2/5. In terms of biological role, catalyzes the transfer of the phosphoribosyl group of 5-phosphorylribose-1-pyrophosphate (PRPP) to anthranilate to yield N-(5'-phosphoribosyl)-anthranilate (PRA). The polypeptide is Anthranilate phosphoribosyltransferase (Salinibacter ruber (strain DSM 13855 / M31)).